A 376-amino-acid polypeptide reads, in one-letter code: N-acetyldiaminopimelate deacetylase (376 aa).

Asp-69 is an active-site residue. Catalysis depends on Glu-128, which acts as the Proton acceptor.

The protein belongs to the peptidase M20A family. N-acetyldiaminopimelate deacetylase subfamily.

The catalysed reaction is N-acetyl-(2S,6S)-2,6-diaminopimelate + H2O = (2S,6S)-2,6-diaminopimelate + acetate. It functions in the pathway amino-acid biosynthesis; L-lysine biosynthesis via DAP pathway; LL-2,6-diaminopimelate from (S)-tetrahydrodipicolinate (acetylase route): step 3/3. Functionally, catalyzes the conversion of N-acetyl-diaminopimelate to diaminopimelate and acetate. In Streptococcus uberis (strain ATCC BAA-854 / 0140J), this protein is N-acetyldiaminopimelate deacetylase.